The primary structure comprises 259 residues: Imidazole glycerol phosphate synthase subunit HisF (259 aa).

Active-site residues include aspartate 11 and aspartate 130.

Belongs to the HisA/HisF family. Heterodimer of HisH and HisF.

It localises to the cytoplasm. It catalyses the reaction 5-[(5-phospho-1-deoxy-D-ribulos-1-ylimino)methylamino]-1-(5-phospho-beta-D-ribosyl)imidazole-4-carboxamide + L-glutamine = D-erythro-1-(imidazol-4-yl)glycerol 3-phosphate + 5-amino-1-(5-phospho-beta-D-ribosyl)imidazole-4-carboxamide + L-glutamate + H(+). It participates in amino-acid biosynthesis; L-histidine biosynthesis; L-histidine from 5-phospho-alpha-D-ribose 1-diphosphate: step 5/9. Its function is as follows. IGPS catalyzes the conversion of PRFAR and glutamine to IGP, AICAR and glutamate. The HisF subunit catalyzes the cyclization activity that produces IGP and AICAR from PRFAR using the ammonia provided by the HisH subunit. This is Imidazole glycerol phosphate synthase subunit HisF from Polaromonas naphthalenivorans (strain CJ2).